A 356-amino-acid chain; its full sequence is tRNA N6-adenosine threonylcarbamoyltransferase (356 aa).

2 residues coordinate Fe cation: H115 and H119. Substrate-binding positions include 138-142 (LVSGG), D171, G184, and N283. Position 311 (D311) interacts with Fe cation.

The protein belongs to the KAE1 / TsaD family. Fe(2+) serves as cofactor.

It is found in the cytoplasm. The enzyme catalyses L-threonylcarbamoyladenylate + adenosine(37) in tRNA = N(6)-L-threonylcarbamoyladenosine(37) in tRNA + AMP + H(+). Its function is as follows. Required for the formation of a threonylcarbamoyl group on adenosine at position 37 (t(6)A37) in tRNAs that read codons beginning with adenine. Is involved in the transfer of the threonylcarbamoyl moiety of threonylcarbamoyl-AMP (TC-AMP) to the N6 group of A37, together with TsaE and TsaB. TsaD likely plays a direct catalytic role in this reaction. In Synechococcus sp. (strain WH7803), this protein is tRNA N6-adenosine threonylcarbamoyltransferase.